The sequence spans 484 residues: tRNA sulfurtransferase (484 aa).

Residues 61 to 165 (ILLVELLGRI…NDKMMLIKAR (105 aa)) enclose the THUMP domain. ATP contacts are provided by residues 183–184 (LI), lysine 265, glycine 287, and glutamine 296. The cysteines at positions 344 and 456 are disulfide-linked. Residues 404-484 (LSANDVILDI…DNVKVLNKIS (81 aa)) enclose the Rhodanese domain. The Cysteine persulfide intermediate role is filled by cysteine 456.

This sequence belongs to the ThiI family.

The protein resides in the cytoplasm. The catalysed reaction is [ThiI sulfur-carrier protein]-S-sulfanyl-L-cysteine + a uridine in tRNA + 2 reduced [2Fe-2S]-[ferredoxin] + ATP + H(+) = [ThiI sulfur-carrier protein]-L-cysteine + a 4-thiouridine in tRNA + 2 oxidized [2Fe-2S]-[ferredoxin] + AMP + diphosphate. The enzyme catalyses [ThiS sulfur-carrier protein]-C-terminal Gly-Gly-AMP + S-sulfanyl-L-cysteinyl-[cysteine desulfurase] + AH2 = [ThiS sulfur-carrier protein]-C-terminal-Gly-aminoethanethioate + L-cysteinyl-[cysteine desulfurase] + A + AMP + 2 H(+). The protein operates within cofactor biosynthesis; thiamine diphosphate biosynthesis. Its function is as follows. Catalyzes the ATP-dependent transfer of a sulfur to tRNA to produce 4-thiouridine in position 8 of tRNAs, which functions as a near-UV photosensor. Also catalyzes the transfer of sulfur to the sulfur carrier protein ThiS, forming ThiS-thiocarboxylate. This is a step in the synthesis of thiazole, in the thiamine biosynthesis pathway. The sulfur is donated as persulfide by IscS. The chain is tRNA sulfurtransferase from Histophilus somni (strain 129Pt) (Haemophilus somnus).